The chain runs to 389 residues: S-adenosylmethionine synthase (389 aa).

Residue H15 participates in ATP binding. D17 lines the Mg(2+) pocket. E43 contributes to the K(+) binding site. E56 and Q99 together coordinate L-methionine. Residues 99–109 (QSPDIAQGVNE) form a flexible loop region. ATP-binding positions include 166–168 (DAK), 234–235 (RF), D243, 249–250 (RK), A266, and K270. An L-methionine-binding site is contributed by D243. K274 is a binding site for L-methionine.

Belongs to the AdoMet synthase family. In terms of assembly, homotetramer; dimer of dimers. Mg(2+) serves as cofactor. Requires K(+) as cofactor.

It is found in the cytoplasm. The enzyme catalyses L-methionine + ATP + H2O = S-adenosyl-L-methionine + phosphate + diphosphate. Its pathway is amino-acid biosynthesis; S-adenosyl-L-methionine biosynthesis; S-adenosyl-L-methionine from L-methionine: step 1/1. Its function is as follows. Catalyzes the formation of S-adenosylmethionine (AdoMet) from methionine and ATP. The overall synthetic reaction is composed of two sequential steps, AdoMet formation and the subsequent tripolyphosphate hydrolysis which occurs prior to release of AdoMet from the enzyme. The chain is S-adenosylmethionine synthase from Neisseria meningitidis serogroup C / serotype 2a (strain ATCC 700532 / DSM 15464 / FAM18).